A 407-amino-acid chain; its full sequence is Peptidase T (407 aa).

Zn(2+) is bound at residue His82. Residue Asp84 is part of the active site. Asp143 serves as a coordination point for Zn(2+). The Proton acceptor role is filled by Glu177. Residues Glu178, Asp200, and His382 each contribute to the Zn(2+) site.

This sequence belongs to the peptidase M20B family. Requires Zn(2+) as cofactor.

The protein localises to the cytoplasm. The enzyme catalyses Release of the N-terminal residue from a tripeptide.. In terms of biological role, cleaves the N-terminal amino acid of tripeptides. This chain is Peptidase T, found in Streptococcus pyogenes serotype M28 (strain MGAS6180).